The sequence spans 336 residues: Holliday junction branch migration complex subunit RuvB (336 aa).

A large ATPase domain (RuvB-L) region spans residues 4-185 (MDERLLSGES…FGVLSRLEYY (182 aa)). Residues leucine 24, arginine 25, glycine 66, lysine 69, threonine 70, threonine 71, 132–134 (EDF), arginine 175, tyrosine 185, and arginine 222 each bind ATP. Threonine 70 is a Mg(2+) binding site. Residues 186 to 256 (TVDQLSAIVE…ITQMALELLQ (71 aa)) form a small ATPAse domain (RuvB-S) region. The head domain (RuvB-H) stretch occupies residues 259–336 (KLGLDHIDHK…EHFGMEMPKV (78 aa)). DNA contacts are provided by arginine 314 and arginine 319.

The protein belongs to the RuvB family. As to quaternary structure, homohexamer. Forms an RuvA(8)-RuvB(12)-Holliday junction (HJ) complex. HJ DNA is sandwiched between 2 RuvA tetramers; dsDNA enters through RuvA and exits via RuvB. An RuvB hexamer assembles on each DNA strand where it exits the tetramer. Each RuvB hexamer is contacted by two RuvA subunits (via domain III) on 2 adjacent RuvB subunits; this complex drives branch migration. In the full resolvosome a probable DNA-RuvA(4)-RuvB(12)-RuvC(2) complex forms which resolves the HJ.

It localises to the cytoplasm. It catalyses the reaction ATP + H2O = ADP + phosphate + H(+). The RuvA-RuvB-RuvC complex processes Holliday junction (HJ) DNA during genetic recombination and DNA repair, while the RuvA-RuvB complex plays an important role in the rescue of blocked DNA replication forks via replication fork reversal (RFR). RuvA specifically binds to HJ cruciform DNA, conferring on it an open structure. The RuvB hexamer acts as an ATP-dependent pump, pulling dsDNA into and through the RuvAB complex. RuvB forms 2 homohexamers on either side of HJ DNA bound by 1 or 2 RuvA tetramers; 4 subunits per hexamer contact DNA at a time. Coordinated motions by a converter formed by DNA-disengaged RuvB subunits stimulates ATP hydrolysis and nucleotide exchange. Immobilization of the converter enables RuvB to convert the ATP-contained energy into a lever motion, pulling 2 nucleotides of DNA out of the RuvA tetramer per ATP hydrolyzed, thus driving DNA branch migration. The RuvB motors rotate together with the DNA substrate, which together with the progressing nucleotide cycle form the mechanistic basis for DNA recombination by continuous HJ branch migration. Branch migration allows RuvC to scan DNA until it finds its consensus sequence, where it cleaves and resolves cruciform DNA. The protein is Holliday junction branch migration complex subunit RuvB of Bacillus cereus (strain ZK / E33L).